A 149-amino-acid polypeptide reads, in one-letter code: MRALIQRVSRAEVTVEGSSIGRIGPGLLVLVCAMRGDPEDAAEKLAARVAKLRIFRDEADKMNRSVQDIGGAVLVVSQFTLAADTRTGNRPGFSSAEAPERGEALYLRFAEALRALGLPVETGAFGADMKVSLVNDGPVTIWMDSADRA.

The short motif at G137 to P138 is the Gly-cisPro motif, important for rejection of L-amino acids element.

It belongs to the DTD family. As to quaternary structure, homodimer.

It localises to the cytoplasm. It catalyses the reaction glycyl-tRNA(Ala) + H2O = tRNA(Ala) + glycine + H(+). The catalysed reaction is a D-aminoacyl-tRNA + H2O = a tRNA + a D-alpha-amino acid + H(+). In terms of biological role, an aminoacyl-tRNA editing enzyme that deacylates mischarged D-aminoacyl-tRNAs. Also deacylates mischarged glycyl-tRNA(Ala), protecting cells against glycine mischarging by AlaRS. Acts via tRNA-based rather than protein-based catalysis; rejects L-amino acids rather than detecting D-amino acids in the active site. By recycling D-aminoacyl-tRNA to D-amino acids and free tRNA molecules, this enzyme counteracts the toxicity associated with the formation of D-aminoacyl-tRNA entities in vivo and helps enforce protein L-homochirality. The chain is D-aminoacyl-tRNA deacylase from Paracoccus denitrificans (strain Pd 1222).